The chain runs to 809 residues: Eukaryotic translation initiation factor 3 subunit C (809 aa).

The interval 1–102 (MSRFFAASYE…DSDESDEASK (102 aa)) is disordered. 2 stretches are compositionally biased toward acidic residues: residues 18 to 30 (SEED…EEEL) and 37 to 59 (SEEE…DSDD). The 176-residue stretch at 605–780 (FHEHINLDLI…SVLSIAKGAE (176 aa)) folds into the PCI domain.

It belongs to the eIF-3 subunit C family. In terms of assembly, component of the eukaryotic translation initiation factor 3 (eIF-3) complex.

The protein localises to the cytoplasm. In terms of biological role, component of the eukaryotic translation initiation factor 3 (eIF-3) complex, which is involved in protein synthesis of a specialized repertoire of mRNAs and, together with other initiation factors, stimulates binding of mRNA and methionyl-tRNAi to the 40S ribosome. The eIF-3 complex specifically targets and initiates translation of a subset of mRNAs involved in cell proliferation. This is Eukaryotic translation initiation factor 3 subunit C from Vanderwaltozyma polyspora (strain ATCC 22028 / DSM 70294 / BCRC 21397 / CBS 2163 / NBRC 10782 / NRRL Y-8283 / UCD 57-17) (Kluyveromyces polysporus).